The following is a 494-amino-acid chain: Cobyric acid synthase (494 aa).

Positions 254 to 453 constitute a GATase cobBQ-type domain; the sequence is KQTVAVIAYP…LHGLFEDPGA (200 aa). Cysteine 338 (nucleophile) is an active-site residue. Histidine 445 is an active-site residue.

The protein belongs to the CobB/CobQ family. CobQ subfamily.

It functions in the pathway cofactor biosynthesis; adenosylcobalamin biosynthesis. Catalyzes amidations at positions B, D, E, and G on adenosylcobyrinic A,C-diamide. NH(2) groups are provided by glutamine, and one molecule of ATP is hydrogenolyzed for each amidation. The chain is Cobyric acid synthase from Albidiferax ferrireducens (strain ATCC BAA-621 / DSM 15236 / T118) (Rhodoferax ferrireducens).